The chain runs to 276 residues: Prohibitin 1 (276 aa).

Belongs to the prohibitin family.

Functionally, required for larval metabolism or for the progression of the larva into a pupa. This chain is Prohibitin 1, found in Drosophila melanogaster (Fruit fly).